The primary structure comprises 152 residues: Ubiquitin-conjugating enzyme E2 N (152 aa).

The 147-residue stretch at 3–149 (GLPRRIIKET…ARAWTRLYAM (147 aa)) folds into the UBC core domain. Lys82 is modified (N6-acetyllysine). Cys87 functions as the Glycyl thioester intermediate in the catalytic mechanism. Lys92 is covalently cross-linked (Glycyl lysine isopeptide (Lys-Gly) (interchain with G-Cter in ISG15)). Ser131 carries the post-translational modification Phosphoserine.

This sequence belongs to the ubiquitin-conjugating enzyme family. In terms of assembly, heterodimer with UBE2V2. Interacts (UBE2V2-UBE2N heterodimer) with the E3 ligase STUB1 (via the U-box domain); the complex has a specific 'Lys-63'-linked polyubiquitination activity. Interacts with RNF8 and RNF168. Interacts with RNF11. Interacts with the E3 ligases, HLTF and SHPRH; the interactions promote the 'Lys-63'-linked polyubiquitination of PCNA upon genotoxic stress and lead to DNA repair. Interacts with ARIH2 (via RING-type 2). Interacts with OTUB1; leading to inhibit E2-conjugating activity. Interacts with GPS2; leading to inhibit E2-conjugating activity. Interacts with RIGI and RNF135; involved in RIGI ubiquitination and activation. In terms of processing, conjugation to ISG15 impairs formation of the thioester bond with ubiquitin but not interaction with UBE2V2.

The catalysed reaction is S-ubiquitinyl-[E1 ubiquitin-activating enzyme]-L-cysteine + [E2 ubiquitin-conjugating enzyme]-L-cysteine = [E1 ubiquitin-activating enzyme]-L-cysteine + S-ubiquitinyl-[E2 ubiquitin-conjugating enzyme]-L-cysteine.. It functions in the pathway protein modification; protein ubiquitination. Its activity is regulated as follows. Activity is inhibited by binding to OTUB1, which prevents 'Lys-63'-linked polyubiquitination. Activity is inhibited by GPS2, leading to prevent 'Lys-63'-linked polyubiquitination. In terms of biological role, the UBE2V1-UBE2N and UBE2V2-UBE2N heterodimers catalyze the synthesis of non-canonical 'Lys-63'-linked polyubiquitin chains. This type of polyubiquitination does not lead to protein degradation by the proteasome. Mediates transcriptional activation of target genes. Plays a role in the control of progress through the cell cycle and differentiation. Plays a role in the error-free DNA repair pathway and contributes to the survival of cells after DNA damage. Acts together with the E3 ligases, HLTF and SHPRH, in the 'Lys-63'-linked poly-ubiquitination of PCNA upon genotoxic stress, which is required for DNA repair. Appears to act together with E3 ligase RNF5 in the 'Lys-63'-linked polyubiquitination of JKAMP thereby regulating JKAMP function by decreasing its association with components of the proteasome and ERAD. Promotes TRIM5 capsid-specific restriction activity and the UBE2V1-UBE2N heterodimer acts in concert with TRIM5 to generate 'Lys-63'-linked polyubiquitin chains which activate the MAP3K7/TAK1 complex which in turn results in the induction and expression of NF-kappa-B and MAPK-responsive inflammatory genes. Together with RNF135 and UB2V1, catalyzes the viral RNA-dependent 'Lys-63'-linked polyubiquitination of RIGI to activate the downstream signaling pathway that leads to interferon beta production. UBE2V1-UBE2N together with TRAF3IP2 E3 ubiquitin ligase mediate 'Lys-63'-linked polyubiquitination of TRAF6, a component of IL17A-mediated signaling pathway. This chain is Ubiquitin-conjugating enzyme E2 N (Ube2n), found in Rattus norvegicus (Rat).